A 198-amino-acid polypeptide reads, in one-letter code: Peroxynitrite isomerase (198 aa).

The GXWXGXG signature appears at 20-26 (GVWEGTG). Residue histidine 189 participates in heme b binding.

The protein belongs to the nitrobindin family. As to quaternary structure, homodimer. The cofactor is heme b.

The catalysed reaction is peroxynitrite = nitrate. The protein operates within nitrogen metabolism. Heme-binding protein able to scavenge peroxynitrite and to protect free L-tyrosine against peroxynitrite-mediated nitration, by acting as a peroxynitrite isomerase that converts peroxynitrite to nitrate. Therefore, this protein likely plays a role in peroxynitrite sensing and in the detoxification of reactive nitrogen and oxygen species (RNS and ROS, respectively). Is able to bind nitric oxide (NO) in vitro, but may act as a sensor of peroxynitrite levels in vivo. The polypeptide is Peroxynitrite isomerase (Leifsonia xyli subsp. xyli (strain CTCB07)).